The sequence spans 182 residues: Large ribosomal subunit protein uL5 (182 aa).

Belongs to the universal ribosomal protein uL5 family. Part of the 50S ribosomal subunit; part of the 5S rRNA/L5/L18/L25 subcomplex. Contacts the 5S rRNA and the P site tRNA. Forms a bridge to the 30S subunit in the 70S ribosome.

In terms of biological role, this is one of the proteins that bind and probably mediate the attachment of the 5S RNA into the large ribosomal subunit, where it forms part of the central protuberance. In the 70S ribosome it contacts protein S13 of the 30S subunit (bridge B1b), connecting the 2 subunits; this bridge is implicated in subunit movement. Contacts the P site tRNA; the 5S rRNA and some of its associated proteins might help stabilize positioning of ribosome-bound tRNAs. This chain is Large ribosomal subunit protein uL5, found in Mycoplasma mobile (strain ATCC 43663 / 163K / NCTC 11711) (Mesomycoplasma mobile).